The primary structure comprises 265 residues: Early E4 31 kDa protein (265 aa).

Belongs to the adenoviridae E4 30 to 34 kDa protein family. In terms of assembly, interacts with E1B-55k.

It is found in the host nucleus. The protein resides in the host cytoplasm. Its function is as follows. Plays a major role to prevent cellular inhibition of viral genome replication by nuclear bodies. Assembles an SCF-like E3 ubiquitin ligase complex based on the cellular proteins ELOB, ELOC, CUL5 and RBX1, in cooperation with viral E1B-55K. This viral RING-type ligase ubiquitinates cellular substrates prior to proteasomal degradation: p53/TP53, LIG4, MRE11-RAD50-NBS1 (MRN) complex, ITGA3, DAXX and BLM. The protein is Early E4 31 kDa protein of Canine adenovirus serotype 1 (strain RI261) (CAdV-1).